A 172-amino-acid polypeptide reads, in one-letter code: Crossover junction endodeoxyribonuclease RuvC (172 aa).

Catalysis depends on residues aspartate 8, glutamate 67, and aspartate 139. Residues aspartate 8, glutamate 67, and aspartate 139 each coordinate Mg(2+).

It belongs to the RuvC family. Homodimer which binds Holliday junction (HJ) DNA. The HJ becomes 2-fold symmetrical on binding to RuvC with unstacked arms; it has a different conformation from HJ DNA in complex with RuvA. In the full resolvosome a probable DNA-RuvA(4)-RuvB(12)-RuvC(2) complex forms which resolves the HJ. The cofactor is Mg(2+).

The protein resides in the cytoplasm. The enzyme catalyses Endonucleolytic cleavage at a junction such as a reciprocal single-stranded crossover between two homologous DNA duplexes (Holliday junction).. The RuvA-RuvB-RuvC complex processes Holliday junction (HJ) DNA during genetic recombination and DNA repair. Endonuclease that resolves HJ intermediates. Cleaves cruciform DNA by making single-stranded nicks across the HJ at symmetrical positions within the homologous arms, yielding a 5'-phosphate and a 3'-hydroxyl group; requires a central core of homology in the junction. The consensus cleavage sequence is 5'-(A/T)TT(C/G)-3'. Cleavage occurs on the 3'-side of the TT dinucleotide at the point of strand exchange. HJ branch migration catalyzed by RuvA-RuvB allows RuvC to scan DNA until it finds its consensus sequence, where it cleaves and resolves the cruciform DNA. The polypeptide is Crossover junction endodeoxyribonuclease RuvC (Hahella chejuensis (strain KCTC 2396)).